Reading from the N-terminus, the 444-residue chain is F-box/FBD/LRR-repeat protein At5g53840 (444 aa).

An F-box domain is found at 17–63 (EERLSQLPDHLICVILSHLSTKDAVRTSILSTRWRNLWQLVPVLDFD). LRR repeat units follow at residues 103 to 123 (YYLTSWIDLVTRHRIQHIDIS), 124 to 150 (VFTCSGFGVIPLSLYTCDTLVHLKLSR), 151 to 171 (VTMVNVEFVSLPCLKILDLDF), 172 to 197 (VNFTNETTLDKIISCSPVLEELTIVK), 199 to 224 (SEDNVKIIQVRSQTLKRVEIHRRFDR), 226 to 252 (NGLVIDTPLLQFLSIKAHSIKSIEFIN), 273 to 299 (NRSMTRDFFTTISRVRSLVIRHGTIKD), 300 to 321 (IFHYMELEPLQQFCYLSELSAV), 322 to 347 (CSISNLEMLLNLLKSCPKLESLSLKL), 369 to 396 (VSSLKFVKLESQLLGCGTELKVARYFLE), and 398 to 423 (STILEKLTLKIDYMYKDEANVNHIRQ). In terms of domain architecture, FBD spans 356-408 (EEVMSSTVPPPCLVSSLKFVKLESQLLGCGTELKVARYFLENSTILEKLTLKI).

This is F-box/FBD/LRR-repeat protein At5g53840 from Arabidopsis thaliana (Mouse-ear cress).